Reading from the N-terminus, the 861-residue chain is Leucine--tRNA ligase (861 aa).

The short motif at P42–H52 is the 'HIGH' region element. Residues K623–S627 carry the 'KMSKS' region motif. An ATP-binding site is contributed by K626.

The protein belongs to the class-I aminoacyl-tRNA synthetase family.

Its subcellular location is the cytoplasm. The catalysed reaction is tRNA(Leu) + L-leucine + ATP = L-leucyl-tRNA(Leu) + AMP + diphosphate. The protein is Leucine--tRNA ligase of Caulobacter vibrioides (strain ATCC 19089 / CIP 103742 / CB 15) (Caulobacter crescentus).